The following is a 608-amino-acid chain: Isocitrate dehydrogenase kinase/phosphatase (608 aa).

ATP is bound by residues 328-334 and Lys349; that span reads APGIKGL. The active site involves Asp384.

It belongs to the AceK family.

The protein localises to the cytoplasm. The catalysed reaction is L-seryl-[isocitrate dehydrogenase] + ATP = O-phospho-L-seryl-[isocitrate dehydrogenase] + ADP + H(+). Bifunctional enzyme which can phosphorylate or dephosphorylate isocitrate dehydrogenase (IDH) on a specific serine residue. This is a regulatory mechanism which enables bacteria to bypass the Krebs cycle via the glyoxylate shunt in response to the source of carbon. When bacteria are grown on glucose, IDH is fully active and unphosphorylated, but when grown on acetate or ethanol, the activity of IDH declines drastically concomitant with its phosphorylation. The protein is Isocitrate dehydrogenase kinase/phosphatase of Cupriavidus pinatubonensis (strain JMP 134 / LMG 1197) (Cupriavidus necator (strain JMP 134)).